The following is a 482-amino-acid chain: Anaerobic nitric oxide reductase flavorubredoxin (482 aa).

A zinc metallo-hydrolase region spans residues 30–210; it reads LRGSSYNSYL…PFSRLVTPKI (181 aa). Positions 79, 81, 83, 147, 166, and 227 each coordinate Fe cation. Positions 254–393 constitute a Flavodoxin-like domain; the sequence is ITLFYDTMSN…ICRQHGREIA (140 aa). FMN-binding positions include 260 to 264 and 342 to 369; these read TMSNN and AFGSHGWSGGAVDRLSTRLQDAGFEMSM. The Rubredoxin-like domain maps to 426 to 477; the sequence is GPCMQCSVCQWVYDPALGEPLQDVAPGTPWSDVPDNFLCPECSLGKDVFDVL. The Fe cation site is built by Cys431, Cys434, Cys464, and Cys467.

The protein in the N-terminal section; belongs to the zinc metallo-hydrolase group 3 family. Homotetramer. Requires Fe cation as cofactor. The cofactor is FMN.

The protein resides in the cytoplasm. It functions in the pathway nitrogen metabolism; nitric oxide reduction. Its function is as follows. Anaerobic nitric oxide reductase; uses NADH to detoxify nitric oxide (NO), protecting several 4Fe-4S NO-sensitive enzymes. Has at least 2 reductase partners, only one of which (NorW, flavorubredoxin reductase) has been identified. NO probably binds to the di-iron center; electrons enter from the NorW at rubredoxin and are transferred sequentially to the FMN center and the di-iron center. Also able to function as an aerobic oxygen reductase. This is Anaerobic nitric oxide reductase flavorubredoxin from Enterobacter sp. (strain 638).